A 26-amino-acid chain; its full sequence is Thrombopoietin (26 aa).

The protein belongs to the EPO/TPO family.

The protein localises to the secreted. Its function is as follows. Lineage-specific cytokine affecting the proliferation and maturation of megakaryocytes from their committed progenitor cells. It acts at a late stage of megakaryocyte development. It may be the major physiological regulator of circulating platelets. In Sus scrofa (Pig), this protein is Thrombopoietin (THPO).